The sequence spans 400 residues: Snake venom metalloproteinase H3 (400 aa).

Positions 1-6 are cleaved as a signal peptide; the sequence is FPYQGS. Residues 7–176 constitute a propeptide that is removed on maturation; it reads SIILESGNVN…KKASQLIVST (170 aa). One can recognise a Peptidase M12B domain in the interval 180–377; sequence KYMEIVIVVD…ENPPCILNKP (198 aa). The Ca(2+) site is built by Glu-183 and Asp-267. 3 disulfide bridges follow: Cys-291-Cys-372, Cys-331-Cys-356, and Cys-333-Cys-339. His-316 contacts Zn(2+). Glu-317 is a catalytic residue. The Zn(2+) site is built by His-320 and His-326. 7 residues coordinate Ca(2+): Cys-372, Asn-375, Val-387, Asn-390, Leu-392, Glu-394, and Asp-400. A propeptide spanning residues 378-400 is cleaved from the precursor; the sequence is LRTDTVSTPVSGNELLEAGKDYD.

This sequence belongs to the venom metalloproteinase (M12B) family. P-I subfamily. In terms of assembly, monomer. It depends on Zn(2+) as a cofactor. In terms of tissue distribution, expressed by the venom gland.

The protein resides in the secreted. In terms of biological role, snake venom metalloproteinase that impairs hemostasis in the envenomed animal. This is Snake venom metalloproteinase H3 from Deinagkistrodon acutus (Hundred-pace snake).